A 136-amino-acid chain; its full sequence is Holo-[acyl-carrier-protein] synthase (136 aa).

Positions 8 and 62 each coordinate Mg(2+).

Belongs to the P-Pant transferase superfamily. AcpS family. It depends on Mg(2+) as a cofactor.

Its subcellular location is the cytoplasm. It carries out the reaction apo-[ACP] + CoA = holo-[ACP] + adenosine 3',5'-bisphosphate + H(+). Functionally, transfers the 4'-phosphopantetheine moiety from coenzyme A to a Ser of acyl-carrier-protein. The chain is Holo-[acyl-carrier-protein] synthase from Polynucleobacter necessarius subsp. necessarius (strain STIR1).